The primary structure comprises 96 residues: Small ribosomal subunit protein bS16 (96 aa).

It belongs to the bacterial ribosomal protein bS16 family.

This chain is Small ribosomal subunit protein bS16, found in Anaplasma phagocytophilum (strain HZ).